Here is a 364-residue protein sequence, read N- to C-terminus: tRNA 2-selenouridine synthase (364 aa).

In terms of domain architecture, Rhodanese spans 14–137 (LIADTPIIDV…LRQTAIQATI (124 aa)). The S-selanylcysteine intermediate role is filled by cysteine 97.

This sequence belongs to the SelU family. As to quaternary structure, monomer.

It catalyses the reaction 5-methylaminomethyl-2-thiouridine(34) in tRNA + selenophosphate + (2E)-geranyl diphosphate + H2O + H(+) = 5-methylaminomethyl-2-selenouridine(34) in tRNA + (2E)-thiogeraniol + phosphate + diphosphate. It carries out the reaction 5-methylaminomethyl-2-thiouridine(34) in tRNA + (2E)-geranyl diphosphate = 5-methylaminomethyl-S-(2E)-geranyl-thiouridine(34) in tRNA + diphosphate. The enzyme catalyses 5-methylaminomethyl-S-(2E)-geranyl-thiouridine(34) in tRNA + selenophosphate + H(+) = 5-methylaminomethyl-2-(Se-phospho)selenouridine(34) in tRNA + (2E)-thiogeraniol. The catalysed reaction is 5-methylaminomethyl-2-(Se-phospho)selenouridine(34) in tRNA + H2O = 5-methylaminomethyl-2-selenouridine(34) in tRNA + phosphate. Functionally, involved in the post-transcriptional modification of the uridine at the wobble position (U34) of tRNA(Lys), tRNA(Glu) and tRNA(Gln). Catalyzes the conversion of 2-thiouridine (S2U-RNA) to 2-selenouridine (Se2U-RNA). Acts in a two-step process involving geranylation of 2-thiouridine (S2U) to S-geranyl-2-thiouridine (geS2U) and subsequent selenation of the latter derivative to 2-selenouridine (Se2U) in the tRNA chain. The chain is tRNA 2-selenouridine synthase from Escherichia coli (strain SE11).